A 461-amino-acid chain; its full sequence is Methylenetetrahydrofolate--tRNA-(uracil-5-)-methyltransferase TrmFO (461 aa).

Residue 16–21 (GAGLAG) participates in FAD binding.

Belongs to the MnmG family. TrmFO subfamily. FAD is required as a cofactor.

It is found in the cytoplasm. The catalysed reaction is uridine(54) in tRNA + (6R)-5,10-methylene-5,6,7,8-tetrahydrofolate + NADH + H(+) = 5-methyluridine(54) in tRNA + (6S)-5,6,7,8-tetrahydrofolate + NAD(+). It carries out the reaction uridine(54) in tRNA + (6R)-5,10-methylene-5,6,7,8-tetrahydrofolate + NADPH + H(+) = 5-methyluridine(54) in tRNA + (6S)-5,6,7,8-tetrahydrofolate + NADP(+). In terms of biological role, catalyzes the folate-dependent formation of 5-methyl-uridine at position 54 (M-5-U54) in all tRNAs. The protein is Methylenetetrahydrofolate--tRNA-(uracil-5-)-methyltransferase TrmFO of Parasynechococcus marenigrum (strain WH8102).